A 103-amino-acid polypeptide reads, in one-letter code: MQNQQIRIRLKAFDHRLIDQSTQEIVETAKRTGAQVRGPIPLPTRKERFTVLISPHVNKDARDQYEIRTHKRVLDIVQPTDKTVDALMKLDLAAGVEVQISLG.

It belongs to the universal ribosomal protein uS10 family. As to quaternary structure, part of the 30S ribosomal subunit.

Functionally, involved in the binding of tRNA to the ribosomes. In Pseudomonas aeruginosa (strain LESB58), this protein is Small ribosomal subunit protein uS10.